The following is a 489-amino-acid chain: Phosphoenolpyruvate carboxykinase (ATP) (489 aa).

Arg-53 and Tyr-159 together coordinate substrate. ATP-binding positions include His-185, 208 to 216, Asp-258, Arg-300, 409 to 410, and Ser-415; these read GLSGTGKTT and KI. Arg-300 serves as a coordination point for substrate.

This sequence belongs to the phosphoenolpyruvate carboxykinase (ATP) family.

The protein localises to the cytoplasm. The enzyme catalyses oxaloacetate + ATP = phosphoenolpyruvate + ADP + CO2. Its pathway is carbohydrate biosynthesis; gluconeogenesis. Involved in the gluconeogenesis. Catalyzes the conversion of oxaloacetate (OAA) to phosphoenolpyruvate (PEP) through direct phosphoryl transfer between the nucleoside triphosphate and OAA. The chain is Phosphoenolpyruvate carboxykinase (ATP) from Aeropyrum pernix (strain ATCC 700893 / DSM 11879 / JCM 9820 / NBRC 100138 / K1).